The sequence spans 395 residues: MLGRSRLTFVLLSVTVTCSVAQHVPPWTEDCRKSTYPPSGPTYRGPVPWYTINLDLPPYKRWHELMVDKAPALKVIVNYLKNMINAFEPSGKIVQLVDQKLPGLLGSFPGPFEEEMKGIAAVTEIPLGEIILFNIFYEFFTICTSIITEDKEGHLLHARNMDFGVFLGWNVNNNTWVVTEELKPLTVNLDFQRNSKTVFKAAGFAGYVGMLTGFKPGLFSLTLNERFSTNGGFMGVIEWILGKKDAKWIGFIIRSVLENSTSYEEAKTILTKSKILAPAYFILGGSKSGEGCVITRDRVQSLDIYELDPKQGIWYVVQTNYDRWKNPFFLDNRRTPAKMCLNRTTQENISFATMYDVLSTKPVLNKLTVYTALIDVTKGQFETYLRDCPDPCIGW.

The N-terminal stretch at 1–21 is a signal peptide; that stretch reads MLGRSRLTFVLLSVTVTCSVA. Cys-31 and Cys-340 are oxidised to a cystine. Catalysis depends on Cys-143, which acts as the Nucleophile. Residues Asn-173, Asn-259, Asn-342, and Asn-348 are each glycosylated (N-linked (GlcNAc...) asparagine). Residues Cys-388 and Cys-392 are joined by a disulfide bond.

It belongs to the acid ceramidase family. In terms of assembly, heterodimer; disulfide-linked. The heterodimer is composed of the disulfide-linked alpha and beta chains produced by autocatalytic cleavage of the precursor. Post-translationally, N-glycosylated. In terms of processing, proteolytically cleaved into two chains alpha and beta that remain associated via a disulfide bond. Cleavage gives rise to a conformation change that activates the enzyme. The same catalytic Cys residue mediates the autoproteolytic cleavage and subsequent hydrolysis of lipid substrates. The beta chain may undergo an additional C-terminal processing.

The protein resides in the lysosome. It is found in the secreted. It carries out the reaction an N-acylsphing-4-enine + H2O = sphing-4-enine + a fatty acid. The enzyme catalyses N-dodecanoylsphing-4-enine + H2O = dodecanoate + sphing-4-enine. The catalysed reaction is N-tetradecanoylsphing-4-enine + H2O = tetradecanoate + sphing-4-enine. It catalyses the reaction N-hexadecanoylsphing-4-enine + H2O = sphing-4-enine + hexadecanoate. It carries out the reaction N-octadecanoylsphing-4-enine + H2O = sphing-4-enine + octadecanoate. The enzyme catalyses N-dodecanoyl-(4R)-hydroxysphinganine + H2O = (4R)-hydroxysphinganine + dodecanoate. The catalysed reaction is N-(dodecanoyl)-sphinganine + H2O = dodecanoate + sphinganine. It catalyses the reaction N-(acetyl)-sphing-4-enine + H2O = sphing-4-enine + acetate. It carries out the reaction N-(hexanoyl)sphing-4-enine + H2O = hexanoate + sphing-4-enine. The enzyme catalyses N-octanoylsphing-4-enine + H2O = octanoate + sphing-4-enine. The catalysed reaction is N-(9Z-octadecenoyl)-sphing-4-enine + H2O = sphing-4-enine + (9Z)-octadecenoate. It catalyses the reaction N-dodecanoylethanolamine + H2O = dodecanoate + ethanolamine. The protein operates within lipid metabolism; sphingolipid metabolism. In terms of biological role, lysosomal ceramidase that hydrolyzes sphingolipid ceramides into sphingosine and free fatty acids at acidic pH. Ceramides, sphingosine, and its phosphorylated form sphingosine-1-phosphate are bioactive lipids that mediate cellular signaling pathways regulating several biological processes including cell proliferation, apoptosis and differentiation. Has a higher catalytic efficiency towards C12-ceramides versus other ceramides. Also catalyzes the reverse reaction allowing the synthesis of ceramides from fatty acids and sphingosine. For the reverse synthetic reaction, the natural sphingosine D-erythro isomer is more efficiently utilized as a substrate compared to D-erythro-dihydrosphingosine and D-erythro-phytosphingosine, while the fatty acids with chain lengths of 12 or 14 carbons are the most efficiently used. Also has an N-acylethanolamine hydrolase activity. By regulating the levels of ceramides, sphingosine and sphingosine-1-phosphate in the epidermis, mediates the calcium-induced differentiation of epidermal keratinocytes. Also indirectly regulates tumor necrosis factor/TNF-induced apoptosis. By regulating the intracellular balance between ceramides and sphingosine, in adrenocortical cells, probably also acts as a regulator of steroidogenesis. The polypeptide is Acid ceramidase (Balaenoptera acutorostrata scammoni (North Pacific minke whale)).